A 401-amino-acid chain; its full sequence is 8-amino-7-oxononanoate synthase (401 aa).

Residue Arg24 participates in substrate binding. 111-112 (GF) is a binding site for pyridoxal 5'-phosphate. His137 lines the substrate pocket. Positions 183, 211, and 240 each coordinate pyridoxal 5'-phosphate. Lys243 carries the post-translational modification N6-(pyridoxal phosphate)lysine. A substrate-binding site is contributed by Thr357.

The protein belongs to the class-II pyridoxal-phosphate-dependent aminotransferase family. BioF subfamily. As to quaternary structure, homodimer. It depends on pyridoxal 5'-phosphate as a cofactor.

The catalysed reaction is 6-carboxyhexanoyl-[ACP] + L-alanine + H(+) = (8S)-8-amino-7-oxononanoate + holo-[ACP] + CO2. The protein operates within cofactor biosynthesis; biotin biosynthesis. Catalyzes the decarboxylative condensation of pimeloyl-[acyl-carrier protein] and L-alanine to produce 8-amino-7-oxononanoate (AON), [acyl-carrier protein], and carbon dioxide. The protein is 8-amino-7-oxononanoate synthase of Xanthomonas axonopodis pv. citri (strain 306).